The sequence spans 314 residues: Cell division protein FtsQ (314 aa).

Basic and acidic residues-rich tracts occupy residues 1-15 and 30-57; these read MTEH…RVAD and ESKD…ERRA. Residues 1-57 are disordered; that stretch reads MTEHNEDPQIERVADDAADEEAVTEPLATESKDEPAEHPEFEGPRRRARRERAERRA. Over 1 to 99 the chain is Cytoplasmic; that stretch reads MTEHNEDPQI…AARGVVRGLK (99 aa). A helical membrane pass occupies residues 100–120; that stretch reads ALLATVVLAVVGIGLGLALYF. Residues 121–314 lie on the Extracellular side of the membrane; it reads TPAMSAREIV…VSSPDLPTVK (194 aa). One can recognise a POTRA domain in the interval 124–192; it reads MSAREIVIIG…SALRITIVER (69 aa).

Belongs to the FtsQ/DivIB family. FtsQ subfamily.

It localises to the cell membrane. In terms of biological role, essential cell division protein. The sequence is that of Cell division protein FtsQ from Mycobacterium bovis (strain ATCC BAA-935 / AF2122/97).